A 130-amino-acid polypeptide reads, in one-letter code: Small ribosomal subunit protein uS11 (130 aa).

Belongs to the universal ribosomal protein uS11 family. As to quaternary structure, part of the 30S ribosomal subunit.

Functionally, located on the platform of the 30S subunit. The protein is Small ribosomal subunit protein uS11 of Thermoplasma acidophilum (strain ATCC 25905 / DSM 1728 / JCM 9062 / NBRC 15155 / AMRC-C165).